The following is a 277-amino-acid chain: Thymidylate synthase (277 aa).

Position 21 (arginine 21) interacts with dUMP. Histidine 51 is a binding site for (6R)-5,10-methylene-5,6,7,8-tetrahydrofolate. 126 to 127 (RR) contributes to the dUMP binding site. The Nucleophile role is filled by cysteine 159. Residues 179-182 (RSGD), asparagine 190, and 220-222 (HLY) contribute to the dUMP site. Aspartate 182 is a (6R)-5,10-methylene-5,6,7,8-tetrahydrofolate binding site. Residue alanine 276 participates in (6R)-5,10-methylene-5,6,7,8-tetrahydrofolate binding.

It belongs to the thymidylate synthase family. Bacterial-type ThyA subfamily. As to quaternary structure, homodimer.

Its subcellular location is the cytoplasm. It catalyses the reaction dUMP + (6R)-5,10-methylene-5,6,7,8-tetrahydrofolate = 7,8-dihydrofolate + dTMP. It functions in the pathway pyrimidine metabolism; dTTP biosynthesis. In terms of biological role, catalyzes the reductive methylation of 2'-deoxyuridine-5'-monophosphate (dUMP) to 2'-deoxythymidine-5'-monophosphate (dTMP) while utilizing 5,10-methylenetetrahydrofolate (mTHF) as the methyl donor and reductant in the reaction, yielding dihydrofolate (DHF) as a by-product. This enzymatic reaction provides an intracellular de novo source of dTMP, an essential precursor for DNA biosynthesis. This chain is Thymidylate synthase, found in Alcanivorax borkumensis (strain ATCC 700651 / DSM 11573 / NCIMB 13689 / SK2).